The chain runs to 83 residues: Apolipoprotein C-I, acidic form (83 aa).

An N-terminal signal peptide occupies residues 1 to 26; the sequence is MRLFLSLPVLVVVLSMVLEGPAPAQG.

Belongs to the apolipoprotein C1 family.

Its subcellular location is the secreted. This is Apolipoprotein C-I, acidic form (APOC1A) from Pan troglodytes (Chimpanzee).